Here is a 295-residue protein sequence, read N- to C-terminus: tRNA-cytidine(32) 2-sulfurtransferase (295 aa).

The PP-loop motif motif lies at 63-68 (SGGKDS). 3 residues coordinate [4Fe-4S] cluster: cysteine 138, cysteine 141, and cysteine 229.

It belongs to the TtcA family. In terms of assembly, homodimer. Requires Mg(2+) as cofactor. The cofactor is [4Fe-4S] cluster.

It localises to the cytoplasm. The catalysed reaction is cytidine(32) in tRNA + S-sulfanyl-L-cysteinyl-[cysteine desulfurase] + AH2 + ATP = 2-thiocytidine(32) in tRNA + L-cysteinyl-[cysteine desulfurase] + A + AMP + diphosphate + H(+). It participates in tRNA modification. Catalyzes the ATP-dependent 2-thiolation of cytidine in position 32 of tRNA, to form 2-thiocytidine (s(2)C32). The sulfur atoms are provided by the cysteine/cysteine desulfurase (IscS) system. The chain is tRNA-cytidine(32) 2-sulfurtransferase from Mesorhizobium japonicum (strain LMG 29417 / CECT 9101 / MAFF 303099) (Mesorhizobium loti (strain MAFF 303099)).